A 1642-amino-acid polypeptide reads, in one-letter code: Cortactin-binding protein 2 (1642 aa).

5 disordered regions span residues 1–27 (MATDGASCEPDFSRAPEDAAGAPAEAA), 203–222 (KKKTSALEEELATEKRRSTE), 366–433 (IGAS…HPGL), 446–471 (GSNANDPDQNGNTTQSPPSRDVSPTS), and 491–611 (RFTS…PSID). A coiled-coil region spans residues 119–276 (RKMQERMSTQ…EQLKRGTDSK (158 aa)). Residues 385-394 (GPSTGSTADL) show a composition bias toward polar residues. A compositionally biased stretch (low complexity) spans 395–407 (TSSPTPVPSTVSP). Arg491 bears the Asymmetric dimethylarginine mark. Residues 497-506 (AGAPPRPGAP) are compositionally biased toward pro residues. The segment covering 576-586 (TVASPPSTLPQ) has biased composition (polar residues). 6 ANK repeats span residues 702-732 (GRPTLLQQAAAQGNVTLLSMLLNEEGLDINY), 736-765 (DGHSALYSAAKNGHTDCVRLLLNAEAQVNV), 769-798 (NGFTPLCAAAAQGHFKCVELLIAYDANINH), 802-831 (GGQTPLYLACKNGNKECIKLLLEAGTDRSV), 835-864 (DGWTPIHAAVDTGNVDSLKLLMYHRAPAHG), and 904-934 (EGWTAAHIAASKGFKNCLEVLCRHGGLEPER). The tract at residues 1440–1469 (ESGAWRKVSTSPRKKSGRFSSPTWNKPDLS) is disordered. A Phosphoserine modification is found at Ser1513. The tract at residues 1546–1642 (RRFDSSGNNP…NSRDLEPTQK (97 aa)) is disordered. Polar residues-rich tracts occupy residues 1552–1563 (GNNPVFSATVNN) and 1571–1588 (KEVSPLSSHQTTECSNSK). The span at 1613–1627 (SQNTKRSSSSSNTRQ) shows a compositional bias: low complexity.

In terms of assembly, interacts with CTTN/cortactin SH3 domain. Interacts with STRN, STRN4/zinedin and MOB4/phocein; this interactions mediate the association with the STRIPAK core complex and may regulate dendritic spine distribution of the STRIPAK complex in hippocampal neurons. Activation of glutamate receptors weakens the interaction with STRN and STRN4.

It is found in the cytoplasm. The protein localises to the cell cortex. Its subcellular location is the cell projection. The protein resides in the dendritic spine. Its function is as follows. Regulates the dendritic spine distribution of CTTN/cortactin in hippocampal neurons, and thus controls dendritic spinogenesis and dendritic spine maintenance. Associates with the striatin-interacting phosphatase and kinase (STRIPAK) core complex to regulate dendritic spine distribution of the STRIPAK complex in hippocampal neurons. This Muntiacus reevesi (Reeves' muntjac) protein is Cortactin-binding protein 2 (CTTNBP2).